Reading from the N-terminus, the 346-residue chain is S-adenosylmethionine:tRNA ribosyltransferase-isomerase (346 aa).

The protein belongs to the QueA family. As to quaternary structure, monomer.

It is found in the cytoplasm. The enzyme catalyses 7-aminomethyl-7-carbaguanosine(34) in tRNA + S-adenosyl-L-methionine = epoxyqueuosine(34) in tRNA + adenine + L-methionine + 2 H(+). Its pathway is tRNA modification; tRNA-queuosine biosynthesis. Transfers and isomerizes the ribose moiety from AdoMet to the 7-aminomethyl group of 7-deazaguanine (preQ1-tRNA) to give epoxyqueuosine (oQ-tRNA). The polypeptide is S-adenosylmethionine:tRNA ribosyltransferase-isomerase (Cereibacter sphaeroides (strain KD131 / KCTC 12085) (Rhodobacter sphaeroides)).